A 300-amino-acid polypeptide reads, in one-letter code: Ribosomal protein bS6--L-glutamate ligase (300 aa).

The ATP-grasp domain occupies 104–287; the sequence is LQLLARQGID…IAGRMIQWIE (184 aa). Residues K141, 178–179, D187, and 211–213 each bind ATP; these read EY and RSN. Residues D248, E260, and N262 each contribute to the Mg(2+) site. Mn(2+) contacts are provided by D248, E260, and N262.

This sequence belongs to the RimK family. Mg(2+) is required as a cofactor. It depends on Mn(2+) as a cofactor.

An L-glutamate ligase that catalyzes the ATP-dependent post-translational addition of glutamate residues to the C-terminus of ribosomal protein bS6 (RpsF). Is also able to catalyze the synthesis of poly-alpha-glutamate in vitro, via ATP hydrolysis from unprotected glutamate as substrate. The number of glutamate residues added to either RpsF or to poly-alpha-glutamate changes with pH. This is Ribosomal protein bS6--L-glutamate ligase from Salmonella agona (strain SL483).